Reading from the N-terminus, the 316-residue chain is 4-hydroxy-3-methylbut-2-enyl diphosphate reductase (316 aa).

Residue Cys-12 participates in [4Fe-4S] cluster binding. (2E)-4-hydroxy-3-methylbut-2-enyl diphosphate contacts are provided by His-41 and His-74. Dimethylallyl diphosphate-binding residues include His-41 and His-74. 2 residues coordinate isopentenyl diphosphate: His-41 and His-74. Cys-96 provides a ligand contact to [4Fe-4S] cluster. His-124 serves as a coordination point for (2E)-4-hydroxy-3-methylbut-2-enyl diphosphate. His-124 provides a ligand contact to dimethylallyl diphosphate. His-124 contributes to the isopentenyl diphosphate binding site. Glu-126 serves as the catalytic Proton donor. Thr-167 serves as a coordination point for (2E)-4-hydroxy-3-methylbut-2-enyl diphosphate. Cys-197 serves as a coordination point for [4Fe-4S] cluster. (2E)-4-hydroxy-3-methylbut-2-enyl diphosphate is bound by residues Ser-225, Ser-226, Asn-227, and Ser-269. Ser-225, Ser-226, Asn-227, and Ser-269 together coordinate dimethylallyl diphosphate. The isopentenyl diphosphate site is built by Ser-225, Ser-226, Asn-227, and Ser-269.

It belongs to the IspH family. As to quaternary structure, homodimer. [4Fe-4S] cluster serves as cofactor.

The enzyme catalyses isopentenyl diphosphate + 2 oxidized [2Fe-2S]-[ferredoxin] + H2O = (2E)-4-hydroxy-3-methylbut-2-enyl diphosphate + 2 reduced [2Fe-2S]-[ferredoxin] + 2 H(+). It catalyses the reaction dimethylallyl diphosphate + 2 oxidized [2Fe-2S]-[ferredoxin] + H2O = (2E)-4-hydroxy-3-methylbut-2-enyl diphosphate + 2 reduced [2Fe-2S]-[ferredoxin] + 2 H(+). It participates in isoprenoid biosynthesis; dimethylallyl diphosphate biosynthesis; dimethylallyl diphosphate from (2E)-4-hydroxy-3-methylbutenyl diphosphate: step 1/1. The protein operates within isoprenoid biosynthesis; isopentenyl diphosphate biosynthesis via DXP pathway; isopentenyl diphosphate from 1-deoxy-D-xylulose 5-phosphate: step 6/6. In terms of biological role, catalyzes the conversion of 1-hydroxy-2-methyl-2-(E)-butenyl 4-diphosphate (HMBPP) into a mixture of isopentenyl diphosphate (IPP) and dimethylallyl diphosphate (DMAPP). Acts in the terminal step of the DOXP/MEP pathway for isoprenoid precursor biosynthesis. This is 4-hydroxy-3-methylbut-2-enyl diphosphate reductase from Pectobacterium carotovorum subsp. carotovorum (strain PC1).